The chain runs to 25 residues: DFPIANGERQSPVDIDTKAVVQDPA.

The region spanning 1 to 25 (DFPIANGERQSPVDIDTKAVVQDPA) is the Alpha-carbonic anhydrase domain. The disordered stretch occupies residues 1–25 (DFPIANGERQSPVDIDTKAVVQDPA).

The protein belongs to the alpha-carbonic anhydrase family. Requires Zn(2+) as cofactor.

Functionally, releases silica from silica-rich substances. This is Bioremediase from Thermoanaerobacter sp.